A 481-amino-acid polypeptide reads, in one-letter code: Regulator of G-protein signaling 1 (481 aa).

Positions 1-31 are disordered; sequence MPALHNPSSPPPSYEAVTSYRNGNSIDSGDK. The fungal-DR stretch occupies residues 33 to 227; that stretch reads QQCSRLMKIT…SVHEIGKSKN (195 aa). One can recognise a DEP domain in the interval 232–312; the sequence is PVYSVSSPSP…KGVSYFLTGK (81 aa). An RGS domain is found at 344–474; sequence ILETILRKPN…AGDSLLKFLE (131 aa).

The protein resides in the nucleus. The protein localises to the cytoplasm. Its function is as follows. Negatively regulates pheromone signaling during mating. Acts in a negative feedback loop that is essential for the mating process. This loop acts to down-regulate cellular sensitivity to pheromone. Activated by ste11. In Schizosaccharomyces pombe (strain 972 / ATCC 24843) (Fission yeast), this protein is Regulator of G-protein signaling 1 (rgs1).